The sequence spans 313 residues: Nematocyst expressed protein 8 (313 aa).

An N-terminal signal peptide occupies residues 1–19 (MLRRPLLLVLFTVFSTLYA). Positions 24–56 (GVSPPTNESEAEVSPGDDEGPPEPGNEPDVNWR) are disordered. The segment covering 32-44 (SEAEVSPGDDEGP) has biased composition (acidic residues). 3 consecutive ShKT domains span residues 65 to 99 (CKDKGKDCESLADEGNCLKKLNYAVGNCPWTCRFC), 109 to 145 (CKDLAGERHCNGWKVKGDCVRLPDYMMQNCKLSCELC), and 151 to 186 (FKYTDEDVRCPEWAQAGYCSTNTDINLKCPHSCRKY). 7 disulfide bridges follow: cysteine 65–cysteine 99, cysteine 72–cysteine 92, cysteine 81–cysteine 96, cysteine 109–cysteine 145, cysteine 127–cysteine 142, cysteine 160–cysteine 179, and cysteine 169–cysteine 183. Residues 222 to 244 (TAAPSTQPAETTKAPPNTAAPTA) show a composition bias toward low complexity. Residues 222–313 (TAAPSTQPAE…LCDEKHSSQQ (92 aa)) are disordered. Over residues 245–265 (APTPAPTPAPAPAPTPAPVAP) the composition is skewed to pro residues. Residues 280–297 (TPEEQDDNSADESTEIEA) show a composition bias toward acidic residues.

This sequence belongs to the NEP3 family. As to expression, nematocytes. In late planulae, is only expressed in a handful of nematocytes in the lower pharynx. Is absent from the tentacles and outer body wall.

It is found in the nematocyst. The protein localises to the secreted. Probable toxin probably only used for predation. The sequence is that of Nematocyst expressed protein 8 from Nematostella vectensis (Starlet sea anemone).